We begin with the raw amino-acid sequence, 100 residues long: SAGA-associated factor 11 (100 aa).

An SGF11-type zinc finger spans residues 73 to 94; that stretch reads FQCENCGRSIAGGRFAQHMTKC.

This sequence belongs to the SGF11 family. Component of the 1.8 MDa SAGA transcription coactivator-HAT complex. SAGA is built of 5 distinct domains with specialized functions. Within the SAGA complex, SUS1, SGF11, SGF73 and UBP8 form an additional subcomplex of SAGA called the DUB module (deubiquitination module). Interacts directly with SGF73, SUS1 and UBP8.

It localises to the nucleus. In terms of biological role, functions as a component of the transcription regulatory histone acetylation (HAT) complex SAGA. At the promoters, SAGA is required for recruitment of the basal transcription machinery. It influences RNA polymerase II transcriptional activity through different activities such as TBP interaction and promoter selectivity, interaction with transcription activators, and chromatin modification through histone acetylation and deubiquitination. SAGA acetylates nucleosomal histone H3 to some extent (to form H3K9ac, H3K14ac, H3K18ac and H3K23ac). SAGA interacts with DNA via upstream activating sequences (UASs). Involved in transcriptional regulation of a subset of SAGA-regulated genes. Within the SAGA complex, participates in a subcomplex, that specifically deubiquitinates histones H2B. The chain is SAGA-associated factor 11 from Debaryomyces hansenii (strain ATCC 36239 / CBS 767 / BCRC 21394 / JCM 1990 / NBRC 0083 / IGC 2968) (Yeast).